Reading from the N-terminus, the 819-residue chain is Glycine-rich domain-containing protein 1 (819 aa).

Its function is as follows. Plays a regulatory role in abscisic acid (ABA) signaling and tolerance to abiotic stress during germination. May be involved in the regulation of the ABI transcriptional factors. This Arabidopsis thaliana (Mouse-ear cress) protein is Glycine-rich domain-containing protein 1.